A 760-amino-acid polypeptide reads, in one-letter code: 5-methyltetrahydropteroyltriglutamate--homocysteine methyltransferase (760 aa).

5-methyltetrahydropteroyltri-L-glutamate contacts are provided by residues 17–20 and K118; that span reads RELK. L-homocysteine-binding positions include 436 to 438 and E489; that span reads IGS. Residues 436-438 and E489 each bind L-methionine; that span reads IGS. Residues 520–521 and W566 each bind 5-methyltetrahydropteroyltri-L-glutamate; that span reads RC. D604 is a binding site for L-homocysteine. D604 lines the L-methionine pocket. E610 provides a ligand contact to 5-methyltetrahydropteroyltri-L-glutamate. Positions 646, 648, and 670 each coordinate Zn(2+). The active-site Proton donor is H699. C731 lines the Zn(2+) pocket.

This sequence belongs to the vitamin-B12 independent methionine synthase family. Requires Zn(2+) as cofactor.

The enzyme catalyses 5-methyltetrahydropteroyltri-L-glutamate + L-homocysteine = tetrahydropteroyltri-L-glutamate + L-methionine. It functions in the pathway amino-acid biosynthesis; L-methionine biosynthesis via de novo pathway; L-methionine from L-homocysteine (MetE route): step 1/1. Catalyzes the transfer of a methyl group from 5-methyltetrahydrofolate to homocysteine resulting in methionine formation. The chain is 5-methyltetrahydropteroyltriglutamate--homocysteine methyltransferase from Vibrio parahaemolyticus serotype O3:K6 (strain RIMD 2210633).